We begin with the raw amino-acid sequence, 551 residues long: Cytochrome c lysine N-methyltransferase 1 (551 aa).

Residues aspartate 46–lysine 273 form the SET domain. The SET-like stretch occupies residues isoleucine 184–aspartate 288.

The protein belongs to the class V-like SAM-binding methyltransferase superfamily.

Its subcellular location is the cytoplasm. It localises to the cytosol. It carries out the reaction L-lysyl-[cytochrome c] + S-adenosyl-L-methionine = N(6)-methyl-L-lysyl-[cytochrome c] + S-adenosyl-L-homocysteine + H(+). Methyltransferase which mediates trimethylation of cytochrome c (CYC1). The chain is Cytochrome c lysine N-methyltransferase 1 (CTM1) from Candida glabrata (strain ATCC 2001 / BCRC 20586 / JCM 3761 / NBRC 0622 / NRRL Y-65 / CBS 138) (Yeast).